We begin with the raw amino-acid sequence, 228 residues long: PKHD-type hydroxylase RPE_4577 (228 aa).

The Fe2OG dioxygenase domain occupies 78 to 180; the sequence is TIFPPLFNRY…RIASFFWTQS (103 aa). Positions 98, 100, and 161 each coordinate Fe cation. Arg-171 lines the 2-oxoglutarate pocket.

Fe(2+) is required as a cofactor. L-ascorbate serves as cofactor.

In Rhodopseudomonas palustris (strain BisA53), this protein is PKHD-type hydroxylase RPE_4577.